The sequence spans 399 residues: Phosphoglycerate kinase (399 aa).

Substrate is bound by residues 21–23 (DFN), R36, 59–62 (HLGR), R120, and R158. ATP is bound by residues K209, G297, E328, and 355-358 (GGDS).

It belongs to the phosphoglycerate kinase family. In terms of assembly, monomer.

Its subcellular location is the cytoplasm. The catalysed reaction is (2R)-3-phosphoglycerate + ATP = (2R)-3-phospho-glyceroyl phosphate + ADP. Its pathway is carbohydrate degradation; glycolysis; pyruvate from D-glyceraldehyde 3-phosphate: step 2/5. The sequence is that of Phosphoglycerate kinase from Streptococcus suis (strain 05ZYH33).